Here is a 281-residue protein sequence, read N- to C-terminus: MASPMGSTASLTGPVVRARARLRYSTITPMKARRVVDLVRGLPADEALTTLQFLPQAASATVYKVLASAIANAQQEAAKQGERLDAEDLVVSAAYVDEGPTLKRFRPRAQGRAYRIRKRTSHITIHVESWPAEAETRATKKAVPKGARHRRRLTGAGKPAASAATETPAAQPVAATTETVEVEAAATAGAPPTVETPVAVASAATETPAATAAETKAGGAAEAEVATTDEQTTETAPAAEAEKPAVRRPAARKSTTSARRRAAETEGHDSDAESTDEGGTR.

The large ribosomal subunit protein uL22 stretch occupies residues 1–225; sequence MASPMGSTAS…KAGGAAEAEV (225 aa). Disordered stretches follow at residues 137–175 and 199–281; these read RATK…PVAA and AVAS…GGTR. The segment covering 139–153 has biased composition (basic residues); it reads TKKAVPKGARHRRRL. Composition is skewed to low complexity over residues 159–175 and 199–239; these read PAAS…PVAA and AVAS…APAA. Residues 226–281 are unknown; sequence ATTDEQTTETAPAAEAEKPAVRRPAARKSTTSARRRAAETEGHDSDAESTDEGGTR. Residues 261 to 271 show a composition bias toward basic and acidic residues; sequence RAAETEGHDSD. Acidic residues predominate over residues 272-281; sequence AESTDEGGTR.

It belongs to the universal ribosomal protein uL22 family. As to quaternary structure, part of the 50S ribosomal subunit.

Functionally, the globular domain of the protein is located near the polypeptide exit tunnel on the outside of the subunit, while an extended beta-hairpin is found that lines the wall of the exit tunnel in the center of the 70S ribosome. In terms of biological role, this protein binds specifically to 23S rRNA; its binding is stimulated by other ribosomal proteins, e.g. L4, L17, and L20. It is important during the early stages of 50S assembly. It makes multiple contacts with different domains of the 23S rRNA in the assembled 50S subunit and ribosome. This is Large ribosomal subunit protein uL22 from Acidothermus cellulolyticus (strain ATCC 43068 / DSM 8971 / 11B).